The sequence spans 110 residues: Prothymosin alpha (110 aa).

Methionine 1 is subject to N-acetylmethionine. The disordered stretch occupies residues methionine 1–aspartate 110. At serine 2 the chain carries N-acetylserine; in Prothymosin alpha, N-terminally processed. Serine 2 carries the post-translational modification Phosphoserine. Residue threonine 8 is modified to Phosphothreonine; by CK2. Phosphoserine is present on residues serine 9 and serine 10. Phosphothreonine; by CK2 is present on residues threonine 13 and threonine 14. Over residues threonine 13–arginine 31 the composition is skewed to basic and acidic residues. The residue at position 15 (lysine 15) is an N6-acetyllysine; alternate. Lysine 15 is modified (N6-succinyllysine; alternate). The span at glutamate 32–glutamate 41 shows a compositional bias: low complexity. Positions glutamate 42–glutamate 83 are enriched in acidic residues. Over residues aspartate 100 to aspartate 110 the composition is skewed to basic and acidic residues. Threonine 101 carries the phosphothreonine modification. Lysine 102 carries the N6-acetyllysine; alternate modification. A Glycyl lysine isopeptide (Lys-Gly) (interchain with G-Cter in SUMO2); alternate cross-link involves residue lysine 102. Threonine 106 is modified (phosphothreonine).

It belongs to the pro/parathymosin family. As to quaternary structure, interacts with NUPR1; regulates apoptotic process. Covalently linked to a small RNA of about 20 nucleotides.

The protein resides in the nucleus. Prothymosin alpha may mediate immune function by conferring resistance to certain opportunistic infections. In Bos taurus (Bovine), this protein is Prothymosin alpha (PTMA).